The following is a 156-amino-acid chain: tRNA (cytidine(34)-2'-O)-methyltransferase (156 aa).

3 residues coordinate S-adenosyl-L-methionine: Gly-100, Ile-122, and Ser-130.

Belongs to the class IV-like SAM-binding methyltransferase superfamily. RNA methyltransferase TrmH family. TrmL subfamily. In terms of assembly, homodimer.

The protein localises to the cytoplasm. The enzyme catalyses cytidine(34) in tRNA + S-adenosyl-L-methionine = 2'-O-methylcytidine(34) in tRNA + S-adenosyl-L-homocysteine + H(+). It carries out the reaction 5-carboxymethylaminomethyluridine(34) in tRNA(Leu) + S-adenosyl-L-methionine = 5-carboxymethylaminomethyl-2'-O-methyluridine(34) in tRNA(Leu) + S-adenosyl-L-homocysteine + H(+). In terms of biological role, methylates the ribose at the nucleotide 34 wobble position in the two leucyl isoacceptors tRNA(Leu)(CmAA) and tRNA(Leu)(cmnm5UmAA). Catalyzes the methyl transfer from S-adenosyl-L-methionine to the 2'-OH of the wobble nucleotide. In Aeromonas hydrophila subsp. hydrophila (strain ATCC 7966 / DSM 30187 / BCRC 13018 / CCUG 14551 / JCM 1027 / KCTC 2358 / NCIMB 9240 / NCTC 8049), this protein is tRNA (cytidine(34)-2'-O)-methyltransferase.